The chain runs to 37 residues: Large ribosomal subunit protein bL36 (37 aa).

The protein belongs to the bacterial ribosomal protein bL36 family.

This is Large ribosomal subunit protein bL36 from Mycoplasmopsis pulmonis (strain UAB CTIP) (Mycoplasma pulmonis).